Reading from the N-terminus, the 452-residue chain is MGRKKKKQLKPWCWYCNRDFDDEKILIQHQKAKHFKCHICHKKLYTGPGLAIHCMQVHKETIDAVPNAIPGRTDIELEIYGMEGIPEKDMEERRRILEQKTQVDGQKKKTNQDDSDYDDDDDTAPSTSFQQMQTQQAFMPTMGQPGIPGLPGAPGMPPGITSLMPAVPPLISGIPHVMAGMHPHGMMSMGGMMHPHRPGIPPMMAGLPPGVPPPGLRPGIPPVTQAQPALSQAVVSRLPVPSTSAPALQSVPKPLFPSAGQAQAHISGPVGTDFKPLNNIPATTAEHPKPTFPAYTQSTMSTTSTTNSTASKPSTSITSKPATLTTTSATSKLVHPDEDISLEEKRAQLPKYQRNLPRPGQAPISNMGSTAVGPLGAMMAPRPGLPPQQHGMRHPLPPHGQYGAPLQGMAGYHPGTMPPFGQGPPMVPPFQGGPPRPLMGIRPPVMSQGGRY.

Residues 1-92 form a microtubule-binding region region; that stretch reads MGRKKKKQLK…EGIPEKDMEE (92 aa). 2 C2H2-type zinc fingers span residues 11–34 and 35–58; these read PWCWYCNRDFDDEKILIQHQKAKH and FKCHICHKKLYTGPGLAIHCMQVH. Disordered regions lie at residues 99–131 and 298–330; these read QKTQVDGQKKKTNQDDSDYDDDDDTAPSTSFQQ and STMSTTSTTNSTASKPSTSITSKPATLTTTSAT. Residues 113 to 123 are compositionally biased toward acidic residues; sequence DDSDYDDDDDT. A GLEBS region spans residues 329 to 361; that stretch reads ATSKLVHPDEDISLEEKRAQLPKYQRNLPRPGQ.

As to quaternary structure, interacts (via GLEBS region) with bub3.

The protein resides in the nucleus. Its subcellular location is the chromosome. It is found in the centromere. It localises to the kinetochore. The protein localises to the cytoplasm. The protein resides in the cytoskeleton. Its subcellular location is the spindle. Its function is as follows. Kinetochore- and microtubule-binding protein that plays a key role in spindle assembly. Znf207/BuGZ is mainly composed of disordered low-complexity regions and undergoes phase transition or coacervation to form temperature-dependent liquid droplets. Coacervation promotes microtubule bundling and concentrates tubulin, promoting microtubule polymerization and assembly of spindle and spindle matrix by concentrating its building blocks. The protein is BUB3-interacting and GLEBS motif-containing protein ZNF207 of Xenopus laevis (African clawed frog).